A 78-amino-acid chain; its full sequence is Acyl carrier protein (78 aa).

One can recognise a Carrier domain in the interval 2-77 (SDTAERVKKI…DAVKFIDKAS (76 aa)). The residue at position 37 (S37) is an O-(pantetheine 4'-phosphoryl)serine.

It belongs to the acyl carrier protein (ACP) family. 4'-phosphopantetheine is transferred from CoA to a specific serine of apo-ACP by AcpS. This modification is essential for activity because fatty acids are bound in thioester linkage to the sulfhydryl of the prosthetic group.

It is found in the cytoplasm. The protein operates within lipid metabolism; fatty acid biosynthesis. Functionally, carrier of the growing fatty acid chain in fatty acid biosynthesis. This is Acyl carrier protein from Brucella abortus (strain S19).